Reading from the N-terminus, the 257-residue chain is 1-(5-phosphoribosyl)-5-[(5-phosphoribosylamino)methylideneamino] imidazole-4-carboxamide isomerase (257 aa).

The active-site Proton acceptor is the aspartate 8. The active-site Proton donor is the aspartate 129.

It belongs to the HisA/HisF family.

The protein resides in the cytoplasm. It carries out the reaction 1-(5-phospho-beta-D-ribosyl)-5-[(5-phospho-beta-D-ribosylamino)methylideneamino]imidazole-4-carboxamide = 5-[(5-phospho-1-deoxy-D-ribulos-1-ylimino)methylamino]-1-(5-phospho-beta-D-ribosyl)imidazole-4-carboxamide. It functions in the pathway amino-acid biosynthesis; L-histidine biosynthesis; L-histidine from 5-phospho-alpha-D-ribose 1-diphosphate: step 4/9. This Nostoc punctiforme (strain ATCC 29133 / PCC 73102) protein is 1-(5-phosphoribosyl)-5-[(5-phosphoribosylamino)methylideneamino] imidazole-4-carboxamide isomerase.